Consider the following 414-residue polypeptide: Tyrosine--tRNA ligase (414 aa).

Tyr-40 contacts L-tyrosine. The 'HIGH' region motif lies at 45 to 54 (ATAASLHVGH). Tyr-175 and Gln-179 together coordinate L-tyrosine. A 'KMSKS' region motif is present at residues 235–239 (KMGKS). Lys-238 serves as a coordination point for ATP. Residues 349-414 (LTVVQLLAQT…KKKHRMVQLG (66 aa)) enclose the S4 RNA-binding domain.

Belongs to the class-I aminoacyl-tRNA synthetase family. TyrS type 1 subfamily. Homodimer.

The protein resides in the cytoplasm. The enzyme catalyses tRNA(Tyr) + L-tyrosine + ATP = L-tyrosyl-tRNA(Tyr) + AMP + diphosphate + H(+). Its function is as follows. Catalyzes the attachment of tyrosine to tRNA(Tyr) in a two-step reaction: tyrosine is first activated by ATP to form Tyr-AMP and then transferred to the acceptor end of tRNA(Tyr). The protein is Tyrosine--tRNA ligase of Paracoccus denitrificans (strain Pd 1222).